The following is a 195-amino-acid chain: Peptidyl-tRNA hydrolase (195 aa).

Tyr17 contacts tRNA. The active-site Proton acceptor is the His22. Tyr68, Asn70, and Asn116 together coordinate tRNA.

It belongs to the PTH family. Monomer.

Its subcellular location is the cytoplasm. It catalyses the reaction an N-acyl-L-alpha-aminoacyl-tRNA + H2O = an N-acyl-L-amino acid + a tRNA + H(+). Functionally, hydrolyzes ribosome-free peptidyl-tRNAs (with 1 or more amino acids incorporated), which drop off the ribosome during protein synthesis, or as a result of ribosome stalling. In terms of biological role, catalyzes the release of premature peptidyl moieties from peptidyl-tRNA molecules trapped in stalled 50S ribosomal subunits, and thus maintains levels of free tRNAs and 50S ribosomes. The protein is Peptidyl-tRNA hydrolase of Shewanella sp. (strain MR-4).